The sequence spans 398 residues: F-box/kelch-repeat protein At1g30090 (398 aa).

The F-box domain occupies 51-98 (EPLIPGLPDDVALNCLLRVPVQSHVSSKSVCKRWHLLFGTKETFFAKR). 5 Kelch repeats span residues 106–152 (PWLF…FRSV), 159–207 (TMFV…VIDG), 209–255 (IYAA…VLNG), 257–304 (LLVT…IYDR), and 305–346 (LFIV…AVNC).

The polypeptide is F-box/kelch-repeat protein At1g30090 (Arabidopsis thaliana (Mouse-ear cress)).